Consider the following 544-residue polypeptide: CTP synthase (544 aa).

Residues 1 to 265 (MTKFIFVTGG…DNIITEQLQL (265 aa)) are amidoligase domain. Ser13 is a binding site for CTP. Ser13 is a binding site for UTP. ATP contacts are provided by residues 14 to 19 (SLGKGI) and Asp71. Residues Asp71 and Glu139 each contribute to the Mg(2+) site. CTP is bound by residues 146 to 148 (DIE), 186 to 191 (KTKPTQ), and Lys222. Residues 186 to 191 (KTKPTQ) and Lys222 each bind UTP. Residues 290-544 (KIAMVGKYVD…VKAALNNKKA (255 aa)) enclose the Glutamine amidotransferase type-1 domain. Position 353 (Gly353) interacts with L-glutamine. Cys380 (nucleophile; for glutamine hydrolysis) is an active-site residue. L-glutamine contacts are provided by residues 381–384 (LGMQ), Glu404, and Arg471. Catalysis depends on residues His517 and Glu519.

Belongs to the CTP synthase family. Homotetramer.

It catalyses the reaction UTP + L-glutamine + ATP + H2O = CTP + L-glutamate + ADP + phosphate + 2 H(+). The enzyme catalyses L-glutamine + H2O = L-glutamate + NH4(+). It carries out the reaction UTP + NH4(+) + ATP = CTP + ADP + phosphate + 2 H(+). It functions in the pathway pyrimidine metabolism; CTP biosynthesis via de novo pathway; CTP from UDP: step 2/2. Its activity is regulated as follows. Allosterically activated by GTP, when glutamine is the substrate; GTP has no effect on the reaction when ammonia is the substrate. The allosteric effector GTP functions by stabilizing the protein conformation that binds the tetrahedral intermediate(s) formed during glutamine hydrolysis. Inhibited by the product CTP, via allosteric rather than competitive inhibition. Its function is as follows. Catalyzes the ATP-dependent amination of UTP to CTP with either L-glutamine or ammonia as the source of nitrogen. Regulates intracellular CTP levels through interactions with the four ribonucleotide triphosphates. In Neisseria meningitidis serogroup C (strain 053442), this protein is CTP synthase.